A 347-amino-acid chain; its full sequence is MVKVLIVDDSASVRLFLQGLLAADPGIEVIGTAADGDEAVEAVARLNPDVVTMDIYMPRMNGLLATRRIMETHPVPIVVVSGNLDAEEVASTFRAIEAGAVTALPRPQGPGHPNHEREARSFVQAVKLMAEVKVIKRWPRRDNPASLPSLPCQAMVPARLKAVAIGASTGGPMVLQTILAGLRRDFPLPVLIVQHMATGFIKGFVEWLNLTSALPVHIAGNGDRLIPGHAYVAPDCFHMLVTEDGTAIELQNTPPENGLRPSVSALFRSVTQAFGAQTVGVLLTGMGSDGARELKRLREAGAVTIVQDRESSVIHGMPGEALKLGAATHTLPPDRIVTALTSLAMEK.

In terms of domain architecture, Response regulatory spans 3-121; that stretch reads KVLIVDDSAS…HPNHEREARS (119 aa). D54 carries the post-translational modification 4-aspartylphosphate. Residues 157 to 342 enclose the CheB-type methylesterase domain; it reads PARLKAVAIG…PDRIVTALTS (186 aa). Active-site residues include S168, H195, and D289.

It belongs to the CheB family. Post-translationally, phosphorylated by CheA. Phosphorylation of the N-terminal regulatory domain activates the methylesterase activity.

It is found in the cytoplasm. It carries out the reaction [protein]-L-glutamate 5-O-methyl ester + H2O = L-glutamyl-[protein] + methanol + H(+). The catalysed reaction is L-glutaminyl-[protein] + H2O = L-glutamyl-[protein] + NH4(+). Functionally, involved in chemotaxis. Part of a chemotaxis signal transduction system that modulates chemotaxis in response to various stimuli. Catalyzes the demethylation of specific methylglutamate residues introduced into the chemoreceptors (methyl-accepting chemotaxis proteins or MCP) by CheR. Also mediates the irreversible deamidation of specific glutamine residues to glutamic acid. This chain is Protein-glutamate methylesterase/protein-glutamine glutaminase 4, found in Geobacter metallireducens (strain ATCC 53774 / DSM 7210 / GS-15).